The primary structure comprises 360 residues: 3-dehydroquinate synthase (360 aa).

Residues Asp-70–Lys-75, Gly-104–Asp-108, Thr-128–Thr-129, Lys-141, and Lys-150 each bind NAD(+). Zn(2+) is bound by residues Glu-183, His-246, and His-263.

It belongs to the sugar phosphate cyclases superfamily. Dehydroquinate synthase family. It depends on Co(2+) as a cofactor. Requires Zn(2+) as cofactor. The cofactor is NAD(+).

The protein localises to the cytoplasm. The enzyme catalyses 7-phospho-2-dehydro-3-deoxy-D-arabino-heptonate = 3-dehydroquinate + phosphate. It participates in metabolic intermediate biosynthesis; chorismate biosynthesis; chorismate from D-erythrose 4-phosphate and phosphoenolpyruvate: step 2/7. In terms of biological role, catalyzes the conversion of 3-deoxy-D-arabino-heptulosonate 7-phosphate (DAHP) to dehydroquinate (DHQ). In Acinetobacter baumannii (strain AYE), this protein is 3-dehydroquinate synthase.